A 224-amino-acid polypeptide reads, in one-letter code: Retinoschisin (224 aa).

The N-terminal stretch at 1-23 is a signal peptide; sequence MPHKIEGFFLLLLFGYEATLGLS. An F5/8 type C domain is found at 63–219; it reads CPYHKPLGFE…IAIRMELLEC (157 aa). Intrachain disulfides connect Cys63–Cys219 and Cys110–Cys142.

In terms of assembly, homooctamer of 4 homodimers; disulfide-linked. The homooctamer has a flat, cogwheel structure with a diameter of about 14 nm. Two stacked octamers can assemble to form a hexadecamer. As to expression, detected in the eye cup. Detected in retina, in the inner segment of the photoreceptors, the inner nuclear layer, the inner plexiform layer and the ganglion cell layer (at protein level). Restricted to the retina. At the mRNA level, detected only within the photoreceptor cell layer, most prominently within the inner segments of the photoreceptors. Undetectable in the inner plexiform layers and the inner nuclear layer.

The protein resides in the secreted. It localises to the cell membrane. Binds negatively charged membrane lipids, such as phosphatidylserine and phosphoinositides. May play a role in cell-cell adhesion processes in the retina, via homomeric interaction between octamers present on the surface of two neighboring cells. Required for normal structure and function of the retina. The protein is Retinoschisin (Rs1) of Mus musculus (Mouse).